A 367-amino-acid chain; its full sequence is Protein RecA (367 aa).

Over residues 1-14 (MSTEVNANQSPNAE) the composition is skewed to polar residues. The segment at 1 to 24 (MSTEVNANQSPNAESRQEAARSGE) is disordered. Residues 15 to 24 (SRQEAARSGE) show a composition bias toward basic and acidic residues. ATP is bound at residue 84–91 (GPESSGKT). The disordered stretch occupies residues 348–367 (GSEVSSNSMRPLTTANRKAA). The segment covering 349 to 367 (SEVSSNSMRPLTTANRKAA) has biased composition (polar residues).

It belongs to the RecA family.

It localises to the cytoplasm. Functionally, can catalyze the hydrolysis of ATP in the presence of single-stranded DNA, the ATP-dependent uptake of single-stranded DNA by duplex DNA, and the ATP-dependent hybridization of homologous single-stranded DNAs. It interacts with LexA causing its activation and leading to its autocatalytic cleavage. This Prochlorococcus marinus (strain MIT 9211) protein is Protein RecA.